The chain runs to 166 residues: MEQLLGQFSLGLFILQIILFVGLILLLKKFAWKPILDAVNEREDGIKNALLSAENARTEMQNLQADNQRILQEARLERDNMLKDAREIKEKMIADSKTEAQAQGIKMIEQAKAAIESEKNAAMAELKSQVSNLSIEIAEKLLKDELSNKDAQTKLVEKMLGDVKLN.

The helical transmembrane segment at 7 to 27 (QFSLGLFILQIILFVGLILLL) threads the bilayer.

Belongs to the ATPase B chain family. In terms of assembly, F-type ATPases have 2 components, F(1) - the catalytic core - and F(0) - the membrane proton channel. F(1) has five subunits: alpha(3), beta(3), gamma(1), delta(1), epsilon(1). F(0) has three main subunits: a(1), b(2) and c(10-14). The alpha and beta chains form an alternating ring which encloses part of the gamma chain. F(1) is attached to F(0) by a central stalk formed by the gamma and epsilon chains, while a peripheral stalk is formed by the delta and b chains.

Its subcellular location is the cell inner membrane. Functionally, f(1)F(0) ATP synthase produces ATP from ADP in the presence of a proton or sodium gradient. F-type ATPases consist of two structural domains, F(1) containing the extramembraneous catalytic core and F(0) containing the membrane proton channel, linked together by a central stalk and a peripheral stalk. During catalysis, ATP synthesis in the catalytic domain of F(1) is coupled via a rotary mechanism of the central stalk subunits to proton translocation. Component of the F(0) channel, it forms part of the peripheral stalk, linking F(1) to F(0). This is ATP synthase subunit b from Flavobacterium psychrophilum (strain ATCC 49511 / DSM 21280 / CIP 103535 / JIP02/86).